We begin with the raw amino-acid sequence, 587 residues long: 5-aminolevulinate synthase, erythroid-specific, mitochondrial (587 aa).

The N-terminal 49 residues, 1-49, are a transit peptide targeting the mitochondrion; it reads MVTAAMLLQCCPVPARGPTSLLGKVVKTHQFLFGIGRCPILATQGPNCS. R163 contacts succinyl-CoA. Positions 258 and 259 each coordinate pyridoxal 5'-phosphate. The succinyl-CoA site is built by S280 and K299. Positions 332, 360, and 388 each coordinate pyridoxal 5'-phosphate. K391 is a catalytic residue. At K391 the chain carries N6-(pyridoxal phosphate)lysine. Pyridoxal 5'-phosphate contacts are provided by T420 and T421. T508 contacts succinyl-CoA.

The protein belongs to the class-II pyridoxal-phosphate-dependent aminotransferase family. Homodimer. Interacts with SUCLA2. Pyridoxal 5'-phosphate is required as a cofactor.

It localises to the mitochondrion inner membrane. It catalyses the reaction succinyl-CoA + glycine + H(+) = 5-aminolevulinate + CO2 + CoA. The protein operates within porphyrin-containing compound metabolism; protoporphyrin-IX biosynthesis; 5-aminolevulinate from glycine: step 1/1. Its function is as follows. Catalyzes the pyridoxal 5'-phosphate (PLP)-dependent condensation of succinyl-CoA and glycine to form aminolevulinic acid (ALA), with CoA and CO2 as by-products. Contributes significantly to heme formation during erythropoiesis. The chain is 5-aminolevulinate synthase, erythroid-specific, mitochondrial (ALAS2) from Pongo abelii (Sumatran orangutan).